Here is a 424-residue protein sequence, read N- to C-terminus: Putative histone deacetylase complex subunit cti6 (424 aa).

Disordered stretches follow at residues 1–49 (MPSN…GEVT), 117–155 (SKYL…TMNS), 170–341 (KEKS…PDGT), and 381–405 (AQSA…ETLR). The PHD-type zinc finger occupies 48-103 (VTRCVCGIVESDDEASDGGLYIQCDQCSVWQHGNCVGFADESEVPEVYYCEICHPE). Low complexity predominate over residues 127–137 (EASQTEESSST). S187 carries the post-translational modification Phosphoserine. A compositionally biased stretch (acidic residues) spans 241 to 256 (DAPEEETVDTVEEIAD). The segment covering 257–266 (EEKHSVKEES) has biased composition (basic and acidic residues). Low complexity predominate over residues 272–287 (QSSQQSTITSISTTTR). The span at 294–303 (REAAAEDKAD) shows a compositional bias: basic and acidic residues. Residues 313–324 (SKTRKVGGRRGK) show a composition bias toward basic residues. Basic and acidic residues predominate over residues 392–405 (SSKEGPEEEKETLR).

The protein resides in the cytoplasm. It is found in the nucleus. Could be a component of the RPD3C(L) histone deacetylase complex (HDAC). In Schizosaccharomyces pombe (strain 972 / ATCC 24843) (Fission yeast), this protein is Putative histone deacetylase complex subunit cti6 (cti6).